A 406-amino-acid chain; its full sequence is Succinylornithine transaminase/acetylornithine aminotransferase (406 aa).

Residues 108–109 (GA) and F141 contribute to the pyridoxal 5'-phosphate site. A N(2)-acetyl-L-ornithine-binding site is contributed by R144. A pyridoxal 5'-phosphate-binding site is contributed by 226–229 (DEVQ). K255 bears the N6-(pyridoxal phosphate)lysine mark. Residue T283 coordinates N(2)-acetyl-L-ornithine. Pyridoxal 5'-phosphate is bound at residue T284.

This sequence belongs to the class-III pyridoxal-phosphate-dependent aminotransferase family. ArgD subfamily. In terms of assembly, homodimer. Pyridoxal 5'-phosphate serves as cofactor.

Its subcellular location is the cytoplasm. The enzyme catalyses N(2)-succinyl-L-ornithine + 2-oxoglutarate = N-succinyl-L-glutamate 5-semialdehyde + L-glutamate. It catalyses the reaction N(2)-acetyl-L-ornithine + 2-oxoglutarate = N-acetyl-L-glutamate 5-semialdehyde + L-glutamate. The protein operates within amino-acid biosynthesis; L-arginine biosynthesis; N(2)-acetyl-L-ornithine from L-glutamate: step 4/4. Its pathway is amino-acid degradation; L-arginine degradation via AST pathway; L-glutamate and succinate from L-arginine: step 3/5. Functionally, transaminates both N(2)-acetylornithine and N(2)-succinylornithine. The sequence is that of Succinylornithine transaminase/acetylornithine aminotransferase (aruC) from Pseudomonas aeruginosa (strain ATCC 15692 / DSM 22644 / CIP 104116 / JCM 14847 / LMG 12228 / 1C / PRS 101 / PAO1).